The sequence spans 353 residues: Cytochrome c biogenesis protein CcsA (353 aa).

8 helical membrane-spanning segments follow: residues 15-35 (FAILFLTMLVYWGGAAFPNLP), 37-57 (LAALGTAGMAIANLCMATLLG), 68-88 (LSNLYESLFFLTWGITTVHLI), 97-117 (LVGVVTAPVAMLIAAFATMTL), 142-162 (VMMLSYSALMVGALLAIAFLI), 261-281 (IIGLGFPLLTIGIIAGGVWAN), 288-308 (WSWDPKETWALITWLVFAAYL), and 322-342 (AILAATGFVVVWICYLGVNLL).

The protein belongs to the CcmF/CycK/Ccl1/NrfE/CcsA family. May interact with ccs1.

It localises to the cellular thylakoid membrane. Its function is as follows. Required during biogenesis of c-type cytochromes (cytochrome c6 and cytochrome f) at the step of heme attachment. This is Cytochrome c biogenesis protein CcsA from Nostoc punctiforme (strain ATCC 29133 / PCC 73102).